A 776-amino-acid polypeptide reads, in one-letter code: Isoamylase (776 aa).

Positions M1 to A26 are cleaved as a signal peptide. Ca(2+) is bound by residues D154, E255, T256, N258, and D285. Residue D401 is the Nucleophile of the active site. A disulfide bridge links C410 with C422. E461 functions as the Proton donor in the catalytic mechanism. Cystine bridges form between C546–C616 and C738–C766.

It belongs to the glycosyl hydrolase 13 family. Monomer. Ca(2+) serves as cofactor.

It is found in the secreted. It carries out the reaction Hydrolysis of (1-&gt;6)-alpha-D-glucosidic branch linkages in glycogen, amylopectin and their beta-limit dextrins.. This Pseudomonas amyloderamosa protein is Isoamylase (iam).